Reading from the N-terminus, the 387-residue chain is Sialic acid-binding Ig-like lectin 13 (387 aa).

Residues 1 to 15 (MLPLLLPLLWAGALA) form the signal peptide. The Ig-like V-type domain occupies 16-138 (LEGIFQLEVP…KDPPLSVHVT (123 aa)). At 16 to 341 (LEGIFQLEVP…QRKSGPMAEV (326 aa)) the chain is on the extracellular side. 3 disulfides stabilise this stretch: cysteine 35–cysteine 168, cysteine 40–cysteine 100, and cysteine 162–cysteine 211. Asparagine 99 carries N-linked (GlcNAc...) asparagine glycosylation. Residue arginine 118 coordinates N-acetylneuraminate. Positions 144 to 227 (PDILIPGALK…AGVTTTRTVR (84 aa)) constitute an Ig-like C2-type 1 domain. Asparagine 229, asparagine 236, and asparagine 254 each carry an N-linked (GlcNAc...) asparagine glycan. An Ig-like C2-type 2 domain is found at 234–326 (PQNLTLTVFQ…RNPLGSQQVS (93 aa)). Cysteine 270 and cysteine 314 are disulfide-bonded. A helical membrane pass occupies residues 342-362 (VLVAIGEAAVKILLLFLCLII). Over 363–387 (LRVKSHRRKAAKAATGVEAAKVVKG) the chain is Cytoplasmic.

Belongs to the immunoglobulin superfamily. SIGLEC (sialic acid binding Ig-like lectin) family.

It localises to the membrane. Functionally, putative adhesion molecule that mediates sialic-acid dependent binding to cells. The protein is Sialic acid-binding Ig-like lectin 13 (SIGLEC13) of Pan troglodytes (Chimpanzee).